Consider the following 369-residue polypeptide: Glutamate 5-kinase (369 aa).

ATP is bound at residue lysine 9. Substrate is bound by residues serine 49, aspartate 136, and asparagine 148. Residues 168–169 (TD) and 210–216 (TGGMLTK) each bind ATP. The region spanning 275 to 355 (QGSIWVDKGA…KGVLIYRDDW (81 aa)) is the PUA domain.

The protein belongs to the glutamate 5-kinase family.

Its subcellular location is the cytoplasm. It catalyses the reaction L-glutamate + ATP = L-glutamyl 5-phosphate + ADP. It participates in amino-acid biosynthesis; L-proline biosynthesis; L-glutamate 5-semialdehyde from L-glutamate: step 1/2. In terms of biological role, catalyzes the transfer of a phosphate group to glutamate to form L-glutamate 5-phosphate. The protein is Glutamate 5-kinase of Streptococcus pneumoniae (strain Hungary19A-6).